The primary structure comprises 160 residues: Phosphopantetheine adenylyltransferase (160 aa).

Threonine 10 lines the substrate pocket. ATP is bound by residues 10–11 (TF) and histidine 18. Positions 42, 74, and 88 each coordinate substrate. ATP is bound by residues 89-91 (GVR), glutamate 99, and 124-130 (WSYISST).

This sequence belongs to the bacterial CoaD family. In terms of assembly, homohexamer. Mg(2+) serves as cofactor.

The protein localises to the cytoplasm. It carries out the reaction (R)-4'-phosphopantetheine + ATP + H(+) = 3'-dephospho-CoA + diphosphate. It functions in the pathway cofactor biosynthesis; coenzyme A biosynthesis; CoA from (R)-pantothenate: step 4/5. Its function is as follows. Reversibly transfers an adenylyl group from ATP to 4'-phosphopantetheine, yielding dephospho-CoA (dPCoA) and pyrophosphate. The polypeptide is Phosphopantetheine adenylyltransferase (Sodalis glossinidius (strain morsitans)).